The chain runs to 506 residues: Acetaldehyde dehydrogenase 2 (506 aa).

240-245 (GETTTG) lines the NAD(+) pocket. Residues Glu262 and Cys301 contribute to the active site.

It belongs to the aldehyde dehydrogenase family.

The catalysed reaction is an aldehyde + NAD(+) + H2O = a carboxylate + NADH + 2 H(+). The protein operates within alcohol metabolism; ethanol degradation; acetate from ethanol: step 2/2. It functions in the pathway ketone degradation; acetoin degradation. In terms of biological role, involved in the catabolism of acetoin and ethanol. This is Acetaldehyde dehydrogenase 2 (acoD) from Cupriavidus necator (strain ATCC 17699 / DSM 428 / KCTC 22496 / NCIMB 10442 / H16 / Stanier 337) (Ralstonia eutropha).